Here is a 181-residue protein sequence, read N- to C-terminus: CDP-diacylglycerol--glycerol-3-phosphate 3-phosphatidyltransferase (181 aa).

Transmembrane regions (helical) follow at residues 8-28 (PNYL…LFYI), 35-55 (KLGA…GYIA), 64-84 (FGKM…TIML), and 148-168 (IIYL…LTII).

Belongs to the CDP-alcohol phosphatidyltransferase class-I family.

The protein resides in the cell membrane. The enzyme catalyses a CDP-1,2-diacyl-sn-glycerol + sn-glycerol 3-phosphate = a 1,2-diacyl-sn-glycero-3-phospho-(1'-sn-glycero-3'-phosphate) + CMP + H(+). It participates in phospholipid metabolism; phosphatidylglycerol biosynthesis; phosphatidylglycerol from CDP-diacylglycerol: step 1/2. This protein catalyzes the committed step to the synthesis of the acidic phospholipids. This chain is CDP-diacylglycerol--glycerol-3-phosphate 3-phosphatidyltransferase (pgsA), found in Rickettsia prowazekii (strain Madrid E).